We begin with the raw amino-acid sequence, 83 residues long: uncharacterized protein (83 aa).

The next 2 membrane-spanning stretches (helical) occupy residues 23-43 and 56-76; these read FSLW…QLIK and TIFV…CVFL.

It localises to the cell membrane. This is an uncharacterized protein from Bacillus subtilis (strain 168).